A 462-amino-acid polypeptide reads, in one-letter code: Light-independent protochlorophyllide reductase subunit N (462 aa).

Residues C24, C49, and C109 each coordinate [4Fe-4S] cluster.

It belongs to the BchN/ChlN family. As to quaternary structure, protochlorophyllide reductase is composed of three subunits; ChlL, ChlN and ChlB. Forms a heterotetramer of two ChlB and two ChlN subunits. It depends on [4Fe-4S] cluster as a cofactor.

It localises to the plastid. It is found in the chloroplast. It catalyses the reaction chlorophyllide a + oxidized 2[4Fe-4S]-[ferredoxin] + 2 ADP + 2 phosphate = protochlorophyllide a + reduced 2[4Fe-4S]-[ferredoxin] + 2 ATP + 2 H2O. The protein operates within porphyrin-containing compound metabolism; chlorophyll biosynthesis (light-independent). Its function is as follows. Component of the dark-operative protochlorophyllide reductase (DPOR) that uses Mg-ATP and reduced ferredoxin to reduce ring D of protochlorophyllide (Pchlide) to form chlorophyllide a (Chlide). This reaction is light-independent. The NB-protein (ChlN-ChlB) is the catalytic component of the complex. The chain is Light-independent protochlorophyllide reductase subunit N from Pleurastrum terricola (Filamentous green alga).